Consider the following 82-residue polypeptide: Envelope small membrane protein (82 aa).

Residues 1–16 (MVDLFFNDTAWYIGQI) are Virion surface-facing. The chain crosses the membrane as a helical span at residues 17 to 37 (LVLVLFCLISLIFVVAFLATI). Residues 38-79 (KLCMQLCGFCNFFIISPSAYVYKRGMQLYKSYSEQVIPPTSD) lie on the Intravirion side of the membrane.

The protein belongs to the betacoronaviruses E protein family. Homopentamer. Interacts with membrane protein M in the budding compartment of the host cell, which is located between endoplasmic reticulum and the Golgi complex. Interacts with Nucleoprotein.

It localises to the host Golgi apparatus membrane. Plays a central role in virus morphogenesis and assembly. Acts as a viroporin and self-assembles in host membranes forming pentameric protein-lipid pores that allow ion transport. Also plays a role in the induction of apoptosis. The chain is Envelope small membrane protein from Human coronavirus HKU1 (isolate N1) (HCoV-HKU1).